Here is a 497-residue protein sequence, read N- to C-terminus: MAMLGFYVTFIFFLVCLFTYFFLQKKPQGQPILKNWPFLRMLPGMLHQIPRIYDWTVEVLEATNLTFYFKGPWLSGTDMLFTADPRNIHHILSSNFGNYPKGPEFKKIFDVLGEGILTVDFELWEEMRKSNHALFHNQDFIELSVSSNKSKLKEGLVPFLDNAAQKNIIIELQDVFQRFMFDTSSILMTGYDPMSLSIEMLEVEFGEAADIGEEAIYYRHFKPVILWRLQNWIGIGLERKMRTALATVNRMFAKIISSRRKEEISRAKTEPYSKDALTYYMNVDTSKYKLLKPNKDKFIRDVIFSLVLAGRDTTSSVLTWFFWLLSKHPQVMAKLRHEINTKFDNEDLEKLVYLHAALSESMRLYPPLPFNHKSPAKPDVLPSGHKVDANSKIVICIYALGRMRSVWGEDALDFKPERWISDNGGLRHEPSYKFMAFNSGPRTCLGKNLALLQMKMVALEIIRNYDFKVIEGHKVEPIPSILLRMKHGLKVTVTKKI.

The helical transmembrane segment at 3–23 (MLGFYVTFIFFLVCLFTYFFL) threads the bilayer. Cys-444 is a heme binding site.

This sequence belongs to the cytochrome P450 family. It depends on heme as a cofactor. In terms of tissue distribution, expressed in the expanding regions of the inflorescence stems, specifically to the epidermal pavement cells, petioles and siliques.

Its subcellular location is the endoplasmic reticulum membrane. Its function is as follows. Involved in the formation of secondary alcohols and ketones in stem cuticular wax. Catalyzes the hydroxylation of a methylene unit in the middle of alkane molecules to form secondary alcohols and possibly also a second hydroxylation leading to the corresponding ketones. This Arabidopsis thaliana (Mouse-ear cress) protein is Alkane hydroxylase MAH1.